A 782-amino-acid chain; its full sequence is Endonuclease MutS2 (782 aa).

Residue 336-343 (GPNTGGKT) coordinates ATP. Residues 707-782 (LDLRGYRYEE…GFGVTVAELK (76 aa)) enclose the Smr domain.

It belongs to the DNA mismatch repair MutS family. MutS2 subfamily. As to quaternary structure, homodimer. Binds to stalled ribosomes, contacting rRNA.

In terms of biological role, endonuclease that is involved in the suppression of homologous recombination and thus may have a key role in the control of bacterial genetic diversity. Functionally, acts as a ribosome collision sensor, splitting the ribosome into its 2 subunits. Detects stalled/collided 70S ribosomes which it binds and splits by an ATP-hydrolysis driven conformational change. Acts upstream of the ribosome quality control system (RQC), a ribosome-associated complex that mediates the extraction of incompletely synthesized nascent chains from stalled ribosomes and their subsequent degradation. Probably generates substrates for RQC. This Staphylococcus epidermidis (strain ATCC 12228 / FDA PCI 1200) protein is Endonuclease MutS2.